The sequence spans 283 residues: Acetylglutamate kinase (283 aa).

Substrate is bound by residues Gly-64–Gly-65, Arg-86, and Asn-178.

Belongs to the acetylglutamate kinase family. ArgB subfamily.

Its subcellular location is the cytoplasm. The catalysed reaction is N-acetyl-L-glutamate + ATP = N-acetyl-L-glutamyl 5-phosphate + ADP. Its pathway is amino-acid biosynthesis; L-arginine biosynthesis; N(2)-acetyl-L-ornithine from L-glutamate: step 2/4. In terms of biological role, catalyzes the ATP-dependent phosphorylation of N-acetyl-L-glutamate. This Lactococcus lactis subsp. cremoris (strain MG1363) protein is Acetylglutamate kinase.